The primary structure comprises 295 residues: Protease HtpX (295 aa).

A run of 2 helical transmembrane segments spans residues 4-24 (ILLF…TLSL) and 41-61 (GQLL…SLFI). Position 147 (histidine 147) interacts with Zn(2+). The active site involves glutamate 148. Histidine 151 provides a ligand contact to Zn(2+). 2 helical membrane passes run 158–178 (VTMA…ARII) and 198–218 (FVAT…IVMW). Glutamate 224 is a Zn(2+) binding site.

This sequence belongs to the peptidase M48B family. Zn(2+) serves as cofactor.

The protein resides in the cell inner membrane. The sequence is that of Protease HtpX from Pseudomonas entomophila (strain L48).